The chain runs to 541 residues: Light-independent protochlorophyllide reductase subunit B (541 aa).

Asp-36 is a binding site for [4Fe-4S] cluster. Catalysis depends on Asp-287, which acts as the Proton donor. Position 422 to 423 (Gly-422 to Leu-423) interacts with substrate.

The protein belongs to the ChlB/BchB/BchZ family. As to quaternary structure, protochlorophyllide reductase is composed of three subunits; BchL, BchN and BchB. Forms a heterotetramer of two BchB and two BchN subunits. [4Fe-4S] cluster serves as cofactor.

It catalyses the reaction chlorophyllide a + oxidized 2[4Fe-4S]-[ferredoxin] + 2 ADP + 2 phosphate = protochlorophyllide a + reduced 2[4Fe-4S]-[ferredoxin] + 2 ATP + 2 H2O. It participates in porphyrin-containing compound metabolism; bacteriochlorophyll biosynthesis (light-independent). Functionally, component of the dark-operative protochlorophyllide reductase (DPOR) that uses Mg-ATP and reduced ferredoxin to reduce ring D of protochlorophyllide (Pchlide) to form chlorophyllide a (Chlide). This reaction is light-independent. The NB-protein (BchN-BchB) is the catalytic component of the complex. The protein is Light-independent protochlorophyllide reductase subunit B of Rhodopseudomonas palustris (strain HaA2).